A 463-amino-acid chain; its full sequence is Glutamate--tRNA ligase (463 aa).

The 'HIGH' region signature appears at 10 to 20; the sequence is PSPTGYLHIGG. A 'KMSKS' region motif is present at residues 252-256; sequence KLSKR. Lys255 contributes to the ATP binding site.

It belongs to the class-I aminoacyl-tRNA synthetase family. Glutamate--tRNA ligase type 1 subfamily. In terms of assembly, monomer.

It localises to the cytoplasm. The catalysed reaction is tRNA(Glu) + L-glutamate + ATP = L-glutamyl-tRNA(Glu) + AMP + diphosphate. Functionally, catalyzes the attachment of glutamate to tRNA(Glu) in a two-step reaction: glutamate is first activated by ATP to form Glu-AMP and then transferred to the acceptor end of tRNA(Glu). In Mycoplasmopsis agalactiae (strain NCTC 10123 / CIP 59.7 / PG2) (Mycoplasma agalactiae), this protein is Glutamate--tRNA ligase.